A 113-amino-acid polypeptide reads, in one-letter code: Large ribosomal subunit protein uL22 (113 aa).

It belongs to the universal ribosomal protein uL22 family. Part of the 50S ribosomal subunit.

In terms of biological role, this protein binds specifically to 23S rRNA; its binding is stimulated by other ribosomal proteins, e.g. L4, L17, and L20. It is important during the early stages of 50S assembly. It makes multiple contacts with different domains of the 23S rRNA in the assembled 50S subunit and ribosome. Its function is as follows. The globular domain of the protein is located near the polypeptide exit tunnel on the outside of the subunit, while an extended beta-hairpin is found that lines the wall of the exit tunnel in the center of the 70S ribosome. This Xylella fastidiosa (strain M12) protein is Large ribosomal subunit protein uL22.